We begin with the raw amino-acid sequence, 87 residues long: Acyl-CoA-binding protein 2 (87 aa).

Residues 2–87 enclose the ACB domain; it reads VSQLFEEKAK…VDNLIAKYSS (86 aa). An acyl-CoA is bound by residues 29 to 33, Lys51, Lys55, and Tyr74; that span reads YGLYK.

This sequence belongs to the ACBP family.

In terms of biological role, binds medium- and long-chain acyl-CoA esters with very high affinity and may function as an intracellular carrier of acyl-CoA esters. The polypeptide is Acyl-CoA-binding protein 2 (ACB2) (Saccharomyces pastorianus (strain ATCC 76670 / Carlsberg bottom yeast no.2 / CBS 1503 / CLIB 180 / NBRC 10610 / NRRL Y-1525) (Saaz-type lager yeast)).